The chain runs to 66 residues: Large ribosomal subunit protein bL31 (66 aa).

Zn(2+)-binding residues include cysteine 16, cysteine 18, cysteine 36, and cysteine 39.

Belongs to the bacterial ribosomal protein bL31 family. Type A subfamily. As to quaternary structure, part of the 50S ribosomal subunit. Requires Zn(2+) as cofactor.

In terms of biological role, binds the 23S rRNA. This Bacillus licheniformis (strain ATCC 14580 / DSM 13 / JCM 2505 / CCUG 7422 / NBRC 12200 / NCIMB 9375 / NCTC 10341 / NRRL NRS-1264 / Gibson 46) protein is Large ribosomal subunit protein bL31.